The sequence spans 725 residues: MLYKGDTLYLDWLEDGIAELVFDAPGSVNKLDTATVASLGQALEVLEKQHDLKGLLLRSNKAAFIVGADITEFLSLFLVPEEQLSQWLHFANSVFNRLEDLPVPTLAAVNGYALGGGCECVLATDYRLATPDLRIGLPETKLGIMPGFGGSVRLPRMLGADSALEIIAAGKDVGAEHALKIGLVDGVVKQEKLIEGAIAVLRQAITGDLDWRAKRQPKLEPLKLSKIEAAMSFTIAKGMVAQTAGKHYPAPMTAVKTIEAAARFGREEALNLENKSFVPLAHTNEARALVGIFLNDQYVKGKAKKLTKDIETPKQAAVLGAGIMGGGIAYQSAWKGVPVIMKDINDKSLNLGMTEAAKLLNKQLERGKIDGLKLAGVISTIHPTLDYAGFDRVDVVVEAVVENPKVKKAVLAETEQKVRPETVLASNTSTIPIGELASALERPENFCGMHFFNPVHRMPLVEIIRGEKSSDETIAKVIAWASKMGKTPIVVNDCPGFFVNRVLFPYFAGFSQLLRDGADFRKVDKVMEKQFGWPMGPAYLLDVVGIDTAHHAQAVMAAGFPQRMQKEYRDAIDALFDANRFGQKNGLGFWRYKEDSKGKPKKEEDAAVDDLLASVSQPKRDFSDDEIIARMMIPMINEVVRCLEEGIIASPAEADMALVYGLGFPPFHGGAFRWLDTQGSAKYLDMAQQYQHLGPLYEVPEGLRNKARHNEPIIPRLNQPVRLVL.

Residues 1-189 are enoyl-CoA hydratase/isomerase; sequence MLYKGDTLYL…KIGLVDGVVK (189 aa). Asp-296 lines the substrate pocket. Positions 311–725 are 3-hydroxyacyl-CoA dehydrogenase; it reads ETPKQAAVLG…RLNQPVRLVL (415 aa). Residues Met-324, Asp-343, 400-402, Lys-407, and Ser-429 each bind NAD(+); that span reads VVE. Residue His-450 is the For 3-hydroxyacyl-CoA dehydrogenase activity of the active site. Asn-453 is a binding site for NAD(+). 2 residues coordinate substrate: Asn-500 and Tyr-660.

It in the N-terminal section; belongs to the enoyl-CoA hydratase/isomerase family. This sequence in the C-terminal section; belongs to the 3-hydroxyacyl-CoA dehydrogenase family. As to quaternary structure, heterotetramer of two alpha chains (FadB) and two beta chains (FadA).

It carries out the reaction a (3S)-3-hydroxyacyl-CoA + NAD(+) = a 3-oxoacyl-CoA + NADH + H(+). It catalyses the reaction a (3S)-3-hydroxyacyl-CoA = a (2E)-enoyl-CoA + H2O. The catalysed reaction is a 4-saturated-(3S)-3-hydroxyacyl-CoA = a (3E)-enoyl-CoA + H2O. The enzyme catalyses (3S)-3-hydroxybutanoyl-CoA = (3R)-3-hydroxybutanoyl-CoA. It carries out the reaction a (3Z)-enoyl-CoA = a 4-saturated (2E)-enoyl-CoA. It catalyses the reaction a (3E)-enoyl-CoA = a 4-saturated (2E)-enoyl-CoA. It functions in the pathway lipid metabolism; fatty acid beta-oxidation. Functionally, involved in the aerobic and anaerobic degradation of long-chain fatty acids via beta-oxidation cycle. Catalyzes the formation of 3-oxoacyl-CoA from enoyl-CoA via L-3-hydroxyacyl-CoA. It can also use D-3-hydroxyacyl-CoA and cis-3-enoyl-CoA as substrate. This chain is Fatty acid oxidation complex subunit alpha, found in Salmonella paratyphi A (strain ATCC 9150 / SARB42).